Consider the following 324-residue polypeptide: Acetyl-coenzyme A carboxylase carboxyl transferase subunit alpha (324 aa).

The 255-residue stretch at 37 to 291 (KLDKRLDRLK…QEYVLQEWVK (255 aa)) folds into the CoA carboxyltransferase C-terminal domain.

The protein belongs to the AccA family. As to quaternary structure, acetyl-CoA carboxylase is a heterohexamer composed of biotin carboxyl carrier protein (AccB), biotin carboxylase (AccC) and two subunits each of ACCase subunit alpha (AccA) and ACCase subunit beta (AccD).

The protein localises to the cytoplasm. It carries out the reaction N(6)-carboxybiotinyl-L-lysyl-[protein] + acetyl-CoA = N(6)-biotinyl-L-lysyl-[protein] + malonyl-CoA. It functions in the pathway lipid metabolism; malonyl-CoA biosynthesis; malonyl-CoA from acetyl-CoA: step 1/1. Its function is as follows. Component of the acetyl coenzyme A carboxylase (ACC) complex. First, biotin carboxylase catalyzes the carboxylation of biotin on its carrier protein (BCCP) and then the CO(2) group is transferred by the carboxyltransferase to acetyl-CoA to form malonyl-CoA. The protein is Acetyl-coenzyme A carboxylase carboxyl transferase subunit alpha of Chlamydia trachomatis serovar L2 (strain ATCC VR-902B / DSM 19102 / 434/Bu).